A 75-amino-acid polypeptide reads, in one-letter code: uncharacterized protein (75 aa).

The next 2 helical transmembrane spans lie at L7–A26 and M36–V58.

Its subcellular location is the cell membrane. This is an uncharacterized protein from Bacillus subtilis (strain 168).